A 276-amino-acid polypeptide reads, in one-letter code: DNA repair protein RecO (276 aa).

This sequence belongs to the RecO family.

In terms of biological role, involved in DNA repair and RecF pathway recombination. The polypeptide is DNA repair protein RecO (Mycobacterium sp. (strain JLS)).